Consider the following 680-residue polypeptide: Probable oxidoreductase YoaE (680 aa).

A 4Fe-4S Mo/W bis-MGD-type domain is found at 9-66 (NGIFKSVCSLDCPDQCGLLIHKKDGKIVKVQGDPDHPVTAGNICNKVRNMTERIYDEK). Residues cysteine 16, cysteine 20, cysteine 24, and cysteine 52 each coordinate [4Fe-4S] cluster.

It belongs to the prokaryotic molybdopterin-containing oxidoreductase family. The cofactor is Mo-bis(molybdopterin guanine dinucleotide).

This Bacillus subtilis (strain 168) protein is Probable oxidoreductase YoaE (yoaE).